Here is a 280-residue protein sequence, read N- to C-terminus: MDIKINDITLGNNLPFVLFGGINVLESLDSTLQTCAHYVEVTRKLGIPYIFKASFDKANRSSIHSYRGVGLEEGLKIFEKVKAEFGIPVITDVHEPHQCQPVAEVCDVIQLPAFLARQTDLVAAMAETGNVINIKKPQFLSPSQMKNIVEKFHEADNGKLILCERGSSFGYDNLVVDILGFGVMKQTCGNLPVIFDVTHSLQTRDAGSAASGGRRAQALDLALAGMATRLAGLFLESHPDPKLAKCDGPSALPLHLLEDFLIRIKALDDLIKSQPILTIE.

Belongs to the KdsA family.

Its subcellular location is the cytoplasm. It catalyses the reaction D-arabinose 5-phosphate + phosphoenolpyruvate + H2O = 3-deoxy-alpha-D-manno-2-octulosonate-8-phosphate + phosphate. It functions in the pathway carbohydrate biosynthesis; 3-deoxy-D-manno-octulosonate biosynthesis; 3-deoxy-D-manno-octulosonate from D-ribulose 5-phosphate: step 2/3. It participates in bacterial outer membrane biogenesis; lipopolysaccharide biosynthesis. This chain is 2-dehydro-3-deoxyphosphooctonate aldolase, found in Neisseria meningitidis serogroup A / serotype 4A (strain DSM 15465 / Z2491).